A 244-amino-acid polypeptide reads, in one-letter code: Protein-lysine methyltransferase METTL21E (244 aa).

The tract at residues 1–20 (MDLTVTHITHKETYKEPRDD) is disordered. A compositionally biased stretch (basic and acidic residues) spans 9-18 (THKETYKEPR). Residues tryptophan 69, 97–99 (GAG), aspartate 118, tryptophan 149, and alanine 170 contribute to the S-adenosyl-L-methionine site.

The protein belongs to the methyltransferase superfamily. METTL21 family.

Its function is as follows. Protein-lysine methyltransferase. The chain is Protein-lysine methyltransferase METTL21E (Mettl21e) from Mus musculus (Mouse).